The sequence spans 104 residues: Phosphoribosyl-ATP pyrophosphatase (104 aa).

Belongs to the PRA-PH family.

It localises to the cytoplasm. It catalyses the reaction 1-(5-phospho-beta-D-ribosyl)-ATP + H2O = 1-(5-phospho-beta-D-ribosyl)-5'-AMP + diphosphate + H(+). The protein operates within amino-acid biosynthesis; L-histidine biosynthesis; L-histidine from 5-phospho-alpha-D-ribose 1-diphosphate: step 2/9. This Streptococcus thermophilus (strain ATCC BAA-491 / LMD-9) protein is Phosphoribosyl-ATP pyrophosphatase.